Here is a 285-residue protein sequence, read N- to C-terminus: NADPH-dependent 7-cyano-7-deazaguanine reductase (285 aa).

91–93 (IES) serves as a coordination point for substrate. NADPH is bound at residue 93-94 (SK). The active-site Thioimide intermediate is the C191. Catalysis depends on D198, which acts as the Proton donor. Position 230–231 (230–231 (HE)) interacts with substrate. NADPH is bound at residue 259 to 260 (RG).

Belongs to the GTP cyclohydrolase I family. QueF type 2 subfamily. Homodimer.

It localises to the cytoplasm. It catalyses the reaction 7-aminomethyl-7-carbaguanine + 2 NADP(+) = 7-cyano-7-deazaguanine + 2 NADPH + 3 H(+). The protein operates within tRNA modification; tRNA-queuosine biosynthesis. Functionally, catalyzes the NADPH-dependent reduction of 7-cyano-7-deazaguanine (preQ0) to 7-aminomethyl-7-deazaguanine (preQ1). This is NADPH-dependent 7-cyano-7-deazaguanine reductase from Legionella pneumophila (strain Paris).